Here is a 149-residue protein sequence, read N- to C-terminus: Probable flagellum biosynthesis repressor protein FlbT (149 aa).

The protein belongs to the FlbT family.

In terms of biological role, has a post-transcriptional repressor function in flagellum biogenesis. Associates with the 5'-UTR of fljK mRNA and promotes its degradation. The polypeptide is Probable flagellum biosynthesis repressor protein FlbT (Rhizobium etli (strain ATCC 51251 / DSM 11541 / JCM 21823 / NBRC 15573 / CFN 42)).